Here is a 113-residue protein sequence, read N- to C-terminus: Cell cycle protein GpsB (113 aa).

The stretch at 36–68 (LDMVIKDYSTFTQEIEALQAENIRLVQELDNAP) forms a coiled coil.

Belongs to the GpsB family. Forms polymers through the coiled coil domains. Interacts with PBP1, MreC and EzrA.

The protein localises to the cytoplasm. Functionally, divisome component that associates with the complex late in its assembly, after the Z-ring is formed, and is dependent on DivIC and PBP2B for its recruitment to the divisome. Together with EzrA, is a key component of the system that regulates PBP1 localization during cell cycle progression. Its main role could be the removal of PBP1 from the cell pole after pole maturation is completed. Also contributes to the recruitment of PBP1 to the division complex. Not essential for septum formation. In Listeria monocytogenes serotype 4b (strain CLIP80459), this protein is Cell cycle protein GpsB.